Reading from the N-terminus, the 155-residue chain is Protein archease-like (155 aa).

D26, D154, and I155 together coordinate Ca(2+).

Belongs to the archease family.

Its function is as follows. Component of the tRNA-splicing ligase complex required to facilitate the enzymatic turnover of catalytic subunit RtcB. The protein is Protein archease-like of Caenorhabditis briggsae.